The chain runs to 209 residues: ATP-dependent Clp protease proteolytic subunit 2 (209 aa).

Ser-106 acts as the Nucleophile in catalysis. The active site involves His-131.

This sequence belongs to the peptidase S14 family. In terms of assembly, fourteen ClpP subunits assemble into 2 heptameric rings which stack back to back to give a disk-like structure with a central cavity, resembling the structure of eukaryotic proteasomes.

The protein resides in the cytoplasm. It catalyses the reaction Hydrolysis of proteins to small peptides in the presence of ATP and magnesium. alpha-casein is the usual test substrate. In the absence of ATP, only oligopeptides shorter than five residues are hydrolyzed (such as succinyl-Leu-Tyr-|-NHMec, and Leu-Tyr-Leu-|-Tyr-Trp, in which cleavage of the -Tyr-|-Leu- and -Tyr-|-Trp bonds also occurs).. Cleaves peptides in various proteins in a process that requires ATP hydrolysis. Has a chymotrypsin-like activity. Plays a major role in the degradation of misfolded proteins. The protein is ATP-dependent Clp protease proteolytic subunit 2 of Mesorhizobium japonicum (strain LMG 29417 / CECT 9101 / MAFF 303099) (Mesorhizobium loti (strain MAFF 303099)).